A 365-amino-acid chain; its full sequence is Chaperone protein DnaJ (365 aa).

The J domain maps to 4-70 (DYYKILGVDR…EKRRIYDQTG (67 aa)). The segment at 139 to 220 (GTEKRIKFRR…CNGTGTIVVD (82 aa)) adopts a CR-type zinc-finger fold. Zn(2+) contacts are provided by Cys-152, Cys-155, Cys-168, Cys-171, Cys-194, Cys-197, Cys-208, and Cys-211. CXXCXGXG motif repeat units follow at residues 152 to 159 (CPDCKGTG), 168 to 175 (CPTCHGTG), 194 to 201 (CNTCGGKG), and 208 to 215 (CPRCNGTG).

It belongs to the DnaJ family. In terms of assembly, homodimer. It depends on Zn(2+) as a cofactor.

The protein localises to the cytoplasm. Functionally, participates actively in the response to hyperosmotic and heat shock by preventing the aggregation of stress-denatured proteins and by disaggregating proteins, also in an autonomous, DnaK-independent fashion. Unfolded proteins bind initially to DnaJ; upon interaction with the DnaJ-bound protein, DnaK hydrolyzes its bound ATP, resulting in the formation of a stable complex. GrpE releases ADP from DnaK; ATP binding to DnaK triggers the release of the substrate protein, thus completing the reaction cycle. Several rounds of ATP-dependent interactions between DnaJ, DnaK and GrpE are required for fully efficient folding. Also involved, together with DnaK and GrpE, in the DNA replication of plasmids through activation of initiation proteins. The protein is Chaperone protein DnaJ of Thermoplasma volcanium (strain ATCC 51530 / DSM 4299 / JCM 9571 / NBRC 15438 / GSS1).